Reading from the N-terminus, the 259-residue chain is Phosphatidylglycerol--prolipoprotein diacylglyceryl transferase (259 aa).

The next 4 helical transmembrane spans lie at 9–29, 55–75, 92–112, and 117–137; these read IIFS…VVGI, FITY…VLLY, EGGM…YLFC, and INFL…LFLG. R138 provides a ligand contact to a 1,2-diacyl-sn-glycero-3-phospho-(1'-sn-glycerol). 3 consecutive transmembrane segments (helical) span residues 172–192, 201–221, and 228–248; these read QLYE…YATF, GLNS…IEIF, and IGFI…MLLL.

The protein belongs to the Lgt family.

It is found in the cell inner membrane. It carries out the reaction L-cysteinyl-[prolipoprotein] + a 1,2-diacyl-sn-glycero-3-phospho-(1'-sn-glycerol) = an S-1,2-diacyl-sn-glyceryl-L-cysteinyl-[prolipoprotein] + sn-glycerol 1-phosphate + H(+). It functions in the pathway protein modification; lipoprotein biosynthesis (diacylglyceryl transfer). Catalyzes the transfer of the diacylglyceryl group from phosphatidylglycerol to the sulfhydryl group of the N-terminal cysteine of a prolipoprotein, the first step in the formation of mature lipoproteins. This chain is Phosphatidylglycerol--prolipoprotein diacylglyceryl transferase, found in Rickettsia felis (strain ATCC VR-1525 / URRWXCal2) (Rickettsia azadi).